Consider the following 325-residue polypeptide: Putative carboxypeptidase YocD (325 aa).

The Nucleophile role is filled by Ser111. Residues Glu228 and His296 each act as charge relay system in the active site.

This sequence belongs to the peptidase S66 family.

In Bacillus subtilis (strain 168), this protein is Putative carboxypeptidase YocD (yocD).